Here is a 151-residue protein sequence, read N- to C-terminus: Superoxide dismutase [Cu-Zn] A (151 aa).

C6 carries S-palmitoyl cysteine lipidation. The Cu cation site is built by H45, H47, and H62. Cysteines 56 and 144 form a disulfide. The Zn(2+) site is built by H62, H70, H79, and D82. Residue H118 participates in Cu cation binding.

The protein belongs to the Cu-Zn superoxide dismutase family. In terms of assembly, homodimer, and heterodimer of Superoxide dismutase [Cu-Zn] A and B. It depends on Cu cation as a cofactor. Zn(2+) serves as cofactor.

The protein resides in the cytoplasm. It localises to the nucleus. It catalyses the reaction 2 superoxide + 2 H(+) = H2O2 + O2. Its function is as follows. Destroys radicals which are normally produced within the cells and which are toxic to biological systems. In Xenopus laevis (African clawed frog), this protein is Superoxide dismutase [Cu-Zn] A (sod1-a).